Reading from the N-terminus, the 128-residue chain is MARQQRRGRKVKKNIPNGVAYIQSTFNNTIVTITDPNGDVVSWASAGSTGFKGAKKGTPFAAQMAAESAARQAMENGMRQIEVMVSGPGAGRETAIRALQATGLEITLIRDITPIPHNGCRPPKRRRV.

Belongs to the universal ribosomal protein uS11 family. As to quaternary structure, part of the 30S ribosomal subunit. Interacts with proteins S7 and S18. Binds to IF-3.

In terms of biological role, located on the platform of the 30S subunit, it bridges several disparate RNA helices of the 16S rRNA. Forms part of the Shine-Dalgarno cleft in the 70S ribosome. The chain is Small ribosomal subunit protein uS11 from Synechococcus sp. (strain JA-2-3B'a(2-13)) (Cyanobacteria bacterium Yellowstone B-Prime).